Here is a 1452-residue protein sequence, read N- to C-terminus: Pleiotropic drug resistance protein 1 (1452 aa).

Residues 152–425 form the ABC transporter 1 domain; sequence LNYLHILPNR…FEYMGFICPE (274 aa). 185-192 lines the ATP pocket; the sequence is GPPSSGKT. An ABC transmembrane type-2 1 domain is found at 504-716; the sequence is LLKACTAREY…AQNAIAVNEF (213 aa). Helical transmembrane passes span 521-541, 554-574, 609-629, 640-660, 664-684, 694-714, and 753-773; these read FVYI…MTLF, GAVF…NGFS, IPIT…VIGF, LLLL…MGAL, IIVA…MGGF, WWIW…IAVN, and IGAG…AVAL. A disordered region spans residues 808 to 830; that stretch reads LGKSSSEKGNDVRRSASSRSMSS. Over residues 812–821 the composition is skewed to basic and acidic residues; that stretch reads SSEKGNDVRR. In terms of domain architecture, ABC transporter 2 spans 855–1107; sequence ITFDDIRYAV…HLIKYFEGID (253 aa). An ATP-binding site is contributed by 900–907; that stretch reads GVSGAGKT. Residues 1180 to 1394 form the ABC transmembrane type-2 2 domain; sequence TQCMACFWKQ…TLYGLIASQF (215 aa). Transmembrane regions (helical) follow at residues 1199–1219, 1239–1259, 1287–1307, 1314–1334, 1344–1364, 1375–1395, and 1421–1441; these read YTAV…TIFW, YIAV…VIAI, LPYL…MIGF, FFWY…YGMM, IAAI…GFIV, WYYY…SQFG, and FVGY…FIFA.

Belongs to the ABC transporter superfamily. ABCG family. PDR (TC 3.A.1.205) subfamily. As to expression, expressed in root hypodermal passage cells. Expressed in stem tissues, particularly the vasculature and nodes adjacent to leaf axils.

The protein localises to the cell membrane. Its function is as follows. Cellular strigolactone (SL) transporter required for the exudation of SL from the root to the soil. The presence of SL in the vicinity of the roots is required for development of symbiotic interactions with arbuscular mycorrhizal fungi (AMF). Transports SL in the above ground tissues and is required for the control of shoot branching. SL regulates plant shoot architecture by inhibiting the outgrowth of axillary buds. Involved in the regulation of shootward and outward directional strigolactone transport in roots. Due to its polar localization in root cells, mediates directional shootward strigolactone transport, as well as localized outward directional transport for exudation to the soil. The sequence is that of Pleiotropic drug resistance protein 1 from Petunia hybrida (Petunia).